A 1119-amino-acid polypeptide reads, in one-letter code: Translation initiation factor IF-2 (1119 aa).

Disordered regions lie at residues 64–463 and 477–507; these read SIKK…TSGY and RPKK…RQRQ. Positions 70 to 102 are enriched in basic and acidic residues; it reads IKKDNYKQNKEDKSSLISSVEEKPFKDNPEKKP. 2 stretches are compositionally biased toward polar residues: residues 116 to 153 and 182 to 212; these read IISN…QNLN and KNTT…KPDQ. Low complexity predominate over residues 213–224; sequence NSSKSKTKNINN. 4 stretches are compositionally biased toward polar residues: residues 242 to 257, 281 to 297, 319 to 328, and 375 to 387; these read NKQN…QTVP, FNRQ…SSNK, FNRQVNTNRS, and QVIN…NSET. The segment covering 421–435 has biased composition (basic and acidic residues); sequence GKTDWDDSAKLEALR. The segment covering 493–507 has biased composition (basic residues); the sequence is KQFKKKKKETTRQRQ. The region spanning 610 to 782 is the tr-type G domain; sequence KRPPVITVMG…ILLVSEVEDL (173 aa). Residues 619 to 626 are G1; the sequence is GHVDHGKT. 619-626 serves as a coordination point for GTP; the sequence is GHVDHGKT. A G2 region spans residues 644–648; that stretch reads GITQH. The segment at 669–672 is G3; that stretch reads DTPG. Residues 669–673 and 723–726 contribute to the GTP site; these read DTPGH and NKID. Residues 723–726 are G4; the sequence is NKID. The G5 stretch occupies residues 759-761; that stretch reads SAI.

Belongs to the TRAFAC class translation factor GTPase superfamily. Classic translation factor GTPase family. IF-2 subfamily.

The protein localises to the cytoplasm. Its function is as follows. One of the essential components for the initiation of protein synthesis. Protects formylmethionyl-tRNA from spontaneous hydrolysis and promotes its binding to the 30S ribosomal subunits. Also involved in the hydrolysis of GTP during the formation of the 70S ribosomal complex. The sequence is that of Translation initiation factor IF-2 from Prochlorococcus marinus (strain MIT 9215).